The chain runs to 207 residues: Probable GTP-binding protein EngB (207 aa).

An EngB-type G domain is found at 22–193; sequence RVPEIVFAGR…LAHFDHYLSG (172 aa). Residues 30–37, 57–61, 75–78, 142–145, and 172–174 each bind GTP; these read GRSNVGKS, GKTRL, DIPG, TKDD, and YSS. 2 residues coordinate Mg(2+): Ser-37 and Thr-59.

This sequence belongs to the TRAFAC class TrmE-Era-EngA-EngB-Septin-like GTPase superfamily. EngB GTPase family. It depends on Mg(2+) as a cofactor.

Functionally, necessary for normal cell division and for the maintenance of normal septation. In Chlorobium luteolum (strain DSM 273 / BCRC 81028 / 2530) (Pelodictyon luteolum), this protein is Probable GTP-binding protein EngB.